A 755-amino-acid polypeptide reads, in one-letter code: Leucine-rich repeat-containing protein 36 (755 aa).

2 LRR repeats span residues 51-72 (SLRSLDLSRNLITSLKGIQYLC) and 73-94 (SLQELNLYYNNIPSLVEVSRLQ). Residues 107 to 146 (NPVVRKDTDYRLFAVYTLQTLEKLDDRAVRDSERRAAKLH) enclose the LRRCT domain. Disordered regions lie at residues 354-374 (GKNYREHSIKPSQDKKATTSH) and 448-517 (LPPG…PPIS). The span at 356–370 (NYREHSIKPSQDKKA) shows a compositional bias: basic and acidic residues. Low complexity predominate over residues 498 to 510 (LSSDLGSLHGLSG). Residues 601-671 (VESLKQKLVK…ELTQLKRLEE (71 aa)) adopt a coiled-coil conformation. Residues 701 to 755 (YSGKSLLPPEKSHPLGRSSPFGKSTLSSSSPMVHDTGQYLIQSVSEADPEPSLWS) form a disordered region. A compositionally biased stretch (polar residues) spans 721–731 (FGKSTLSSSSP).

The polypeptide is Leucine-rich repeat-containing protein 36 (Lrrc36) (Mus musculus (Mouse)).